We begin with the raw amino-acid sequence, 558 residues long: Membrane protein insertase YidC (558 aa).

Transmembrane regions (helical) follow at residues 6-26, 326-348, 355-377, 424-444, 469-489, and 512-532; these read VIAA…FFQP, LAID…DYFF, GLAI…NFSF, LPIL…FVTI, VFGL…WPII, and IFMF…AGLV.

It belongs to the OXA1/ALB3/YidC family. Type 1 subfamily. As to quaternary structure, interacts with the Sec translocase complex via SecD. Specifically interacts with transmembrane segments of nascent integral membrane proteins during membrane integration.

It localises to the cell inner membrane. In terms of biological role, required for the insertion and/or proper folding and/or complex formation of integral membrane proteins into the membrane. Involved in integration of membrane proteins that insert both dependently and independently of the Sec translocase complex, as well as at least some lipoproteins. Aids folding of multispanning membrane proteins. This is Membrane protein insertase YidC from Pelagibacter ubique (strain HTCC1062).